We begin with the raw amino-acid sequence, 221 residues long: CASP-like protein 2U10 (221 aa).

Positions 1–22 (MDSSSKPMNGSAGGSPVGDERK) are disordered. Topologically, residues 1–31 (MDSSSKPMNGSAGGSPVGDERKMGDHEHEFR) are cytoplasmic. The chain crosses the membrane as a helical span at residues 32–52 (ISIILLRSFLLVLVIISEALM). The Extracellular segment spans residues 53-91 (VTDRETGSVPLPFFGLPRPVFVTKTAKYELVTGLKFYVD). A helical membrane pass occupies residues 92-112 (ALGVVIGYTVLHLLFNIGLVA). Residues 113-122 (TKGTVVDCKS) are Cytoplasmic-facing. The helical transmembrane segment at 123–143 (VAWISFIADSMMGYLLLSSAA) threads the bilayer. Residues 144 to 174 (VATEIGYLAEEGAPAVLWRKVCNAFGYFCTV) lie on the Extracellular side of the membrane. The chain crosses the membrane as a helical span at residues 175-195 (YAISVVICFIAALVSFVVVGI). The Cytoplasmic portion of the chain corresponds to 196-221 (SAYHLFRLYGIQQQAAREKEKLSAEM).

This sequence belongs to the Casparian strip membrane proteins (CASP) family. As to quaternary structure, homodimer and heterodimers.

The protein resides in the cell membrane. The protein is CASP-like protein 2U10 of Selaginella moellendorffii (Spikemoss).